The sequence spans 128 residues: MRHRKSGRQLNRNSSHRQAMFRNMAGSLVRHEIIKTTLPKAKELRRVVEPLITLAKTDSVANRRLAFARTRDNEVVAKLFTVLGPRFASRAGGYTRILKCGFRAGDNAPMAYIELVDRADSETEAAAE.

The protein belongs to the bacterial ribosomal protein bL17 family. Part of the 50S ribosomal subunit. Contacts protein L32.

The chain is Large ribosomal subunit protein bL17 from Proteus mirabilis (strain HI4320).